A 673-amino-acid polypeptide reads, in one-letter code: Potassium-transporting ATPase ATP-binding subunit (673 aa).

The next 4 helical transmembrane spans lie at 34 to 54 (IMFV…YPDL), 65 to 85 (VFSI…SEAL), 216 to 236 (IALF…ILTM), and 253 to 273 (IALA…AIGI). Asp-304 functions as the 4-aspartylphosphate intermediate in the catalytic mechanism. ATP is bound by residues Asp-341, Glu-345, 370 to 377 (FTAETRMS), and Lys-388. Mg(2+) is bound by residues Asp-511 and Asp-515. 3 helical membrane-spanning segments follow: residues 581-601 (FAIL…LNIM), 609-629 (AVLS…PIAM), and 649-669 (VYGL…DLII).

This sequence belongs to the cation transport ATPase (P-type) (TC 3.A.3) family. Type IA subfamily. As to quaternary structure, the system is composed of three essential subunits: KdpA, KdpB and KdpC.

It is found in the cell membrane. The enzyme catalyses K(+)(out) + ATP + H2O = K(+)(in) + ADP + phosphate + H(+). Its function is as follows. Part of the high-affinity ATP-driven potassium transport (or Kdp) system, which catalyzes the hydrolysis of ATP coupled with the electrogenic transport of potassium into the cytoplasm. This subunit is responsible for energy coupling to the transport system and for the release of the potassium ions to the cytoplasm. This is Potassium-transporting ATPase ATP-binding subunit from Staphylococcus epidermidis (strain ATCC 35984 / DSM 28319 / BCRC 17069 / CCUG 31568 / BM 3577 / RP62A).